The sequence spans 145 residues: Peptide methionine sulfoxide reductase MsrB (145 aa).

Residues Lys-6–Val-129 enclose the MsrB domain. Catalysis depends on Cys-118, which acts as the Nucleophile.

This sequence belongs to the MsrB Met sulfoxide reductase family.

The enzyme catalyses L-methionyl-[protein] + [thioredoxin]-disulfide + H2O = L-methionyl-(R)-S-oxide-[protein] + [thioredoxin]-dithiol. This Listeria monocytogenes serovar 1/2a (strain ATCC BAA-679 / EGD-e) protein is Peptide methionine sulfoxide reductase MsrB.